An 81-amino-acid polypeptide reads, in one-letter code: Photosystem I iron-sulfur center (81 aa).

4Fe-4S ferredoxin-type domains follow at residues 2–31 (SHSV…MVAW) and 39–68 (IASA…VRVY). [4Fe-4S] cluster contacts are provided by C11, C14, C17, C21, C48, C51, C54, and C58.

In terms of assembly, the eukaryotic PSI reaction center is composed of at least 11 subunits. [4Fe-4S] cluster is required as a cofactor.

The protein resides in the plastid. Its subcellular location is the chloroplast thylakoid membrane. The catalysed reaction is reduced [plastocyanin] + hnu + oxidized [2Fe-2S]-[ferredoxin] = oxidized [plastocyanin] + reduced [2Fe-2S]-[ferredoxin]. In terms of biological role, apoprotein for the two 4Fe-4S centers FA and FB of photosystem I (PSI); essential for photochemical activity. FB is the terminal electron acceptor of PSI, donating electrons to ferredoxin. The C-terminus interacts with PsaA/B/D and helps assemble the protein into the PSI complex. Required for binding of PsaD and PsaE to PSI. PSI is a plastocyanin/cytochrome c6-ferredoxin oxidoreductase, converting photonic excitation into a charge separation, which transfers an electron from the donor P700 chlorophyll pair to the spectroscopically characterized acceptors A0, A1, FX, FA and FB in turn. In Guillardia theta (Cryptophyte), this protein is Photosystem I iron-sulfur center.